The sequence spans 160 residues: MGVFTYETEFTSVIPPPRLFKAFILDADNLIPKIAPQAVKCAEIIEGDGGVGTIKKITFGEGSQFGSVTHKIDGIDKDNFVYSYSLVEGDALSDKIEKISYETKLVASSDGGSIIKSTSNYHTKGDVEIKEEHVKAGKEKASHLFKLVEGYLLANPNEYC.

The protein belongs to the BetVI family. Post-translationally, phosphorylated in vivo. Phosphorylation prevents its activity as ribonuclease.

Functionally, possesses ribonuclease activity in vitro. The protein is Major strawberry allergen Fra a 1.05 of Fragaria ananassa (Strawberry).